We begin with the raw amino-acid sequence, 211 residues long: B3 domain-containing protein At5g42700 (211 aa).

Residues 110 to 201 constitute a DNA-binding region (TF-B3); it reads FVKSMLQSHV…AFKVYITRVG (92 aa).

It is found in the nucleus. The polypeptide is B3 domain-containing protein At5g42700 (Arabidopsis thaliana (Mouse-ear cress)).